Consider the following 58-residue polypeptide: Conotoxin Ar5.4 (58 aa).

Positions 1–20 (RIQSDLIRAALEDADMKNEK) are excised as a propeptide.

It belongs to the conotoxin T superfamily. In terms of processing, contains 2 disulfide bonds that can be either 'C1-C3, C2-C4' or 'C1-C4, C2-C3', since these disulfide connectivities have been observed for conotoxins with cysteine framework V (for examples, see AC P0DQQ7 and AC P81755). Expressed by the venom duct.

The protein resides in the secreted. This chain is Conotoxin Ar5.4, found in Conus arenatus (Sand-dusted cone).